The sequence spans 266 residues: uncharacterized protein (266 aa).

Positions 35-131 constitute a PH domain; it reads VLVGEGVLVK…WMLHIERCVT (97 aa). The FYVE-type zinc-finger motif lies at 152 to 212; the sequence is DGEAVKCMVC…VCDHCFDSLS (61 aa). Zn(2+)-binding residues include C158, C161, C175, C178, C183, C186, C204, and C207. The tract at residues 213 to 266 is disordered; the sequence is SATPGQEESEPKTGNRLHHEDSSSDSEDEVNGSGRSSNESRPTFYREDVQQPAT. Composition is skewed to basic and acidic residues over residues 221-234 and 256-266; these read SEPKTGNRLHHEDS and FYREDVQQPAT.

This is an uncharacterized protein from Caenorhabditis elegans.